The chain runs to 741 residues: Copper-transporting ATPase (741 aa).

The region spanning 1-67 (MKESFYIEGM…LIEKLGYSPK (67 aa)) is the HMA domain. Residues 1–83 (MKESFYIEGM…KKEFFSPNVK (83 aa)) lie on the Cytoplasmic side of the membrane. 2 residues coordinate Cu cation: Cys12 and Cys15. A helical transmembrane segment spans residues 84-104 (LALAVIFTLFVVYLSMGAMLS). Residues 105 to 124 (PSLLPESLLTINNHSNFLNA) are Extracellular-facing. A helical membrane pass occupies residues 125–144 (CLQLIGTLIVMHLGRDFYIQ). Residues 145–151 (GFKALWH) lie on the Cytoplasmic side of the membrane. The chain crosses the membrane as a helical span at residues 152–172 (RQPNMSSLIAIGTSAALISSL). Over 173–190 (WQLYFVYTSQWSYGHYYF) the chain is Extracellular. Residues 191–211 (ESVCVILMFVMVGKRIENVSK) form a helical membrane-spanning segment. Residues 212-339 (DKALDAMQAL…KAEISRLADK (128 aa)) lie on the Cytoplasmic side of the membrane. The chain crosses the membrane as a helical span at residues 340–362 (VSSVFVPSVIAIAILAFVVWLII). The Extracellular segment spans residues 363–375 (APKPDFWWNFGIA). The helical transmembrane segment at 376–393 (LEVFVSVLVISCPCALGL) threads the bilayer. The Cytoplasmic portion of the chain corresponds to 394–681 (ATPMSILVAN…KLSQATIKNI (288 aa)). The 4-aspartylphosphate intermediate role is filled by Asp431. Residues Asp627 and Asp631 each contribute to the Mg(2+) site. Residues 682–701 (KENLFWAFCYNSVFIPLACG) form a helical membrane-spanning segment. Topologically, residues 702–712 (VLYKANIMLSP) are extracellular. A helical membrane pass occupies residues 713-731 (AIAGLAMSLSSVSVVLNSQ). Over 732-741 (RLRNFKIKDH) the chain is Cytoplasmic.

It belongs to the cation transport ATPase (P-type) (TC 3.A.3) family. Type IB subfamily.

The protein localises to the cell membrane. The enzyme catalyses Cu(2+)(in) + ATP + H2O = Cu(2+)(out) + ADP + phosphate + H(+). Its function is as follows. Probably involved in copper export. This chain is Copper-transporting ATPase (copA), found in Helicobacter pylori (Campylobacter pylori).